A 369-amino-acid chain; its full sequence is tRNA-specific 2-thiouridylase MnmA (369 aa).

ATP-binding positions include 12–19 and Met-38; that span reads GMSGGVDS. Residues 98 to 100 are interaction with target base in tRNA; sequence NPD. Cys-103 serves as the catalytic Nucleophile. The cysteines at positions 103 and 200 are disulfide-linked. Gly-128 serves as a coordination point for ATP. An interaction with tRNA region spans residues 150–152; sequence KDQ. Cys-200 serves as the catalytic Cysteine persulfide intermediate. Positions 312–313 are interaction with tRNA; that stretch reads RY.

It belongs to the MnmA/TRMU family. As to quaternary structure, interacts with TusE.

It is found in the cytoplasm. It carries out the reaction S-sulfanyl-L-cysteinyl-[protein] + uridine(34) in tRNA + AH2 + ATP = 2-thiouridine(34) in tRNA + L-cysteinyl-[protein] + A + AMP + diphosphate + H(+). In terms of biological role, catalyzes the 2-thiolation of uridine at the wobble position (U34) of tRNA(Lys), tRNA(Glu) and tRNA(Gln), leading to the formation of s(2)U34, the first step of tRNA-mnm(5)s(2)U34 synthesis. Sulfur is provided by IscS, via a sulfur-relay system. Binds ATP and its substrate tRNAs. The chain is tRNA-specific 2-thiouridylase MnmA from Sodalis glossinidius (strain morsitans).